A 130-amino-acid polypeptide reads, in one-letter code: Small ribosomal subunit protein uS11 (130 aa).

This sequence belongs to the universal ribosomal protein uS11 family. In terms of assembly, part of the 30S ribosomal subunit. Interacts with proteins S7 and S18. Binds to IF-3.

In terms of biological role, located on the platform of the 30S subunit, it bridges several disparate RNA helices of the 16S rRNA. Forms part of the Shine-Dalgarno cleft in the 70S ribosome. The chain is Small ribosomal subunit protein uS11 from Gloeothece citriformis (strain PCC 7424) (Cyanothece sp. (strain PCC 7424)).